Consider the following 244-residue polypeptide: Troponin I, cardiac muscle (244 aa).

The span at 1-25 shows a compositional bias: acidic residues; it reads MSDEEEVTYEEEEEEYVEEEEEEVV. The interval 1–67 is disordered; that stretch reads MSDEEEVTYE…PQVKRKPKIS (67 aa). Serine 2 is modified (N-acetylserine). Serine 2 carries the post-translational modification Phosphoserine; by CK2. Residues 27–42 show a composition bias toward pro residues; it reads PEPPKPAPPPAAPPPL.

It belongs to the troponin I family. In terms of assembly, binds to actin and tropomyosin. Heart.

Functionally, troponin I is the inhibitory subunit of troponin, the thin filament regulatory complex which confers calcium-sensitivity to striated muscle actomyosin ATPase activity. This is Troponin I, cardiac muscle (tnni3) from Xenopus laevis (African clawed frog).